We begin with the raw amino-acid sequence, 250 residues long: Ubiquinone/menaquinone biosynthesis C-methyltransferase UbiE (250 aa).

S-adenosyl-L-methionine is bound by residues T73, D94, 122 to 123 (NA), and S139.

It belongs to the class I-like SAM-binding methyltransferase superfamily. MenG/UbiE family.

It catalyses the reaction a 2-demethylmenaquinol + S-adenosyl-L-methionine = a menaquinol + S-adenosyl-L-homocysteine + H(+). The enzyme catalyses a 2-methoxy-6-(all-trans-polyprenyl)benzene-1,4-diol + S-adenosyl-L-methionine = a 5-methoxy-2-methyl-3-(all-trans-polyprenyl)benzene-1,4-diol + S-adenosyl-L-homocysteine + H(+). It participates in quinol/quinone metabolism; menaquinone biosynthesis; menaquinol from 1,4-dihydroxy-2-naphthoate: step 2/2. Its pathway is cofactor biosynthesis; ubiquinone biosynthesis. Functionally, methyltransferase required for the conversion of demethylmenaquinol (DMKH2) to menaquinol (MKH2) and the conversion of 2-polyprenyl-6-methoxy-1,4-benzoquinol (DDMQH2) to 2-polyprenyl-3-methyl-6-methoxy-1,4-benzoquinol (DMQH2). This chain is Ubiquinone/menaquinone biosynthesis C-methyltransferase UbiE, found in Francisella philomiragia subsp. philomiragia (strain ATCC 25017 / CCUG 19701 / FSC 153 / O#319-036).